The sequence spans 316 residues: tRNA dimethylallyltransferase (316 aa).

17–24 (GPTASGKT) is a binding site for ATP. Position 19–24 (19–24 (TASGKT)) interacts with substrate. Interaction with substrate tRNA stretches follow at residues 42 to 45 (DSAL), 166 to 170 (QRLSR), and 247 to 252 (RCVGYR).

It belongs to the IPP transferase family. In terms of assembly, monomer. The cofactor is Mg(2+).

It catalyses the reaction adenosine(37) in tRNA + dimethylallyl diphosphate = N(6)-dimethylallyladenosine(37) in tRNA + diphosphate. Its function is as follows. Catalyzes the transfer of a dimethylallyl group onto the adenine at position 37 in tRNAs that read codons beginning with uridine, leading to the formation of N6-(dimethylallyl)adenosine (i(6)A). This is tRNA dimethylallyltransferase from Citrobacter koseri (strain ATCC BAA-895 / CDC 4225-83 / SGSC4696).